Here is a 540-residue protein sequence, read N- to C-terminus: Peptide chain release factor 3 (540 aa).

In terms of domain architecture, tr-type G spans 14–283; it reads NQRRNFAIIS…AFLDYALKPI (270 aa). GTP is bound by residues 23–30, 91–95, and 145–148; these read SHPDAGKT, DTPGH, and NKLD.

Belongs to the TRAFAC class translation factor GTPase superfamily. Classic translation factor GTPase family. PrfC subfamily.

The protein localises to the cytoplasm. In terms of biological role, increases the formation of ribosomal termination complexes and stimulates activities of RF-1 and RF-2. It binds guanine nucleotides and has strong preference for UGA stop codons. It may interact directly with the ribosome. The stimulation of RF-1 and RF-2 is significantly reduced by GTP and GDP, but not by GMP. This chain is Peptide chain release factor 3, found in Gloeothece citriformis (strain PCC 7424) (Cyanothece sp. (strain PCC 7424)).